The chain runs to 600 residues: ATP-dependent zinc metalloprotease FtsH 1 (600 aa).

At 1–8 (MKTHYFKK) the chain is on the cytoplasmic side. The helical transmembrane segment at 9 to 29 (IFNLKFLVIFFSILFCILLIL) threads the bilayer. Topologically, residues 30 to 130 (DLTFERRIKG…PKTDFHLSEL (101 aa)) are extracellular. The helical transmembrane segment at 131–151 (ILSLVPIVSSTIFMFYIISNI) threads the bilayer. Over 152-600 (KKSSGKLNSN…IEQLVVNTKK (449 aa)) the chain is Cytoplasmic. 215 to 222 (GPPGTGKT) contacts ATP. Residue histidine 437 coordinates Zn(2+). Glutamate 438 is an active-site residue. Positions 441 and 513 each coordinate Zn(2+).

It in the central section; belongs to the AAA ATPase family. The protein in the C-terminal section; belongs to the peptidase M41 family. As to quaternary structure, homohexamer. Requires Zn(2+) as cofactor.

It localises to the cell membrane. Acts as a processive, ATP-dependent zinc metallopeptidase for both cytoplasmic and membrane proteins. Plays a role in the quality control of integral membrane proteins. This is ATP-dependent zinc metalloprotease FtsH 1 from Phytoplasma mali (strain AT).